We begin with the raw amino-acid sequence, 225 residues long: Cytochrome c oxidase subunit 2 (225 aa).

Residues Met-1–Asn-25 are Mitochondrial intermembrane-facing. Residues Met-26–Leu-47 form a helical membrane-spanning segment. Residues Asn-48–Glu-62 are Mitochondrial matrix-facing. A helical membrane pass occupies residues Ile-63–Lys-82. Residues Ile-83–Asn-225 lie on the Mitochondrial intermembrane side of the membrane. His-159, Cys-194, Glu-196, Cys-198, His-202, and Met-205 together coordinate Cu cation. Glu-196 provides a ligand contact to Mg(2+).

Belongs to the cytochrome c oxidase subunit 2 family. In terms of assembly, component of the cytochrome c oxidase (complex IV, CIV), a multisubunit enzyme composed of a catalytic core of 3 subunits and several supernumerary subunits. The complex exists as a monomer or a dimer and forms supercomplexes (SCs) in the inner mitochondrial membrane with ubiquinol-cytochrome c oxidoreductase (cytochrome b-c1 complex, complex III, CIII). It depends on Cu cation as a cofactor.

Its subcellular location is the mitochondrion inner membrane. It carries out the reaction 4 Fe(II)-[cytochrome c] + O2 + 8 H(+)(in) = 4 Fe(III)-[cytochrome c] + 2 H2O + 4 H(+)(out). Functionally, component of the cytochrome c oxidase, the last enzyme in the mitochondrial electron transport chain which drives oxidative phosphorylation. The respiratory chain contains 3 multisubunit complexes succinate dehydrogenase (complex II, CII), ubiquinol-cytochrome c oxidoreductase (cytochrome b-c1 complex, complex III, CIII) and cytochrome c oxidase (complex IV, CIV), that cooperate to transfer electrons derived from NADH and succinate to molecular oxygen, creating an electrochemical gradient over the inner membrane that drives transmembrane transport and the ATP synthase. Cytochrome c oxidase is the component of the respiratory chain that catalyzes the reduction of oxygen to water. Electrons originating from reduced cytochrome c in the intermembrane space (IMS) are transferred via the dinuclear copper A center (CU(A)) of subunit 2 and heme A of subunit 1 to the active site in subunit 1, a binuclear center (BNC) formed by heme A3 and copper B (CU(B)). The BNC reduces molecular oxygen to 2 water molecules using 4 electrons from cytochrome c in the IMS and 4 protons from the mitochondrial matrix. This is Cytochrome c oxidase subunit 2 (COII) from Apis florea (Dwarf honeybee).